A 610-amino-acid chain; its full sequence is MQRDFRWLWVYEIGYAADNSRTLNVDSTAMTLPMSDPTAWATAMNNLGMAPLGIAGQPILPDFDPALGMMTGIPPITPMMPGLGIVPPPIPPDMPVVKEIIHCKSCTLFPPNPNLPPPATRERPPGCKTVFVGGLPENGTEQIIVEVFEQCGEIIAIRKSKKNFCHIRFAEEYMVDKALYLSGYRIRLGSSTDKKDTGRLHVDFAQARDDLYEWECKQRMLAREERHRRRMEEERLRPPSPPPVVHYSDHECSIVAEKLKDDSKFSEAVQTLLTWIERGEVNRRSANNFYSMIQSANSHVRRLVNEKAAHEKDMEEAKEKFKQALSGILIQFEQIVAVYHSASKQKAWDHFTKAQRKNISVWCKQAEEIRNIHNDELMGIRREEEMEMSDDEIEEMTETKETEESALVSQAEALKEENDSLRWQLDAYRNEVELLKQEQGKVHREDDPNKEQQLKLLQQALQGMQQHLLKVQEEYKKKEAELEKLKDDKLQVEKMLENLKEKESCASRLCASNQDSEYPLEKTMNSSPIKSEREALLVGIISTFLHVHPFGASIEYICSYLHRLDNKICTSDVECLMGRLQHTFKQEMTGVGASLEKRWKFCGFEGLKLT.

The region spanning 128–207 (KTVFVGGLPE…GRLHVDFAQA (80 aa)) is the RRM domain. Coiled-coil stretches lie at residues 293–328 (IQSANSHVRRLVNEKAAHEKDMEEAKEKFKQALSGI) and 381–505 (RREE…KESC).

This sequence belongs to the ENOX family. It depends on Cu cation as a cofactor. Post-translationally, glycosylated. As to expression, found in the sera of cancer patients with a wide variety of cancers including breast, prostate, lung and ovarian cancers, leukemias, and lymphomas. Not found in the serum of healthy volunteers or patients with disorders other than cancer. Probably shed into serum by cancer cells. Found on the cell borders of renal, kidney and ovarian carcinomas but not on the borders of surrounding non-cancerous stromal cells.

It localises to the cell membrane. The protein localises to the secreted. The protein resides in the extracellular space. With respect to regulation, inhibited by the antitumor sulfonylurea LY181984, the vabilloid capsaicin, and retinoids. May be involved in cell growth. Probably acts as a terminal oxidase of plasma electron transport from cytosolic NAD(P)H via hydroquinones to acceptors at the cell surface. Hydroquinone oxidase activity alternates with a protein disulfide-thiol interchange/oxidoreductase activity which may control physical membrane displacements associated with vesicle budding or cell enlargement. The activities oscillate with a period length of 22 minutes and play a role in control of the ultradian cellular biological clock. This is Ecto-NOX disulfide-thiol exchanger 2 (ENOX2) from Homo sapiens (Human).